The following is a 191-amino-acid chain: Small ribosomal subunit protein uS5 (191 aa).

Residues 1-20 are disordered; sequence MAGERERGGRERSRDREERD. Residues 23 to 86 form the S5 DRBM domain; that stretch reads FVDKLVHINR…ESAKRNLTRV (64 aa).

Belongs to the universal ribosomal protein uS5 family. In terms of assembly, part of the 30S ribosomal subunit. Contacts proteins S4 and S8.

Its function is as follows. With S4 and S12 plays an important role in translational accuracy. Located at the back of the 30S subunit body where it stabilizes the conformation of the head with respect to the body. In Nitrobacter winogradskyi (strain ATCC 25391 / DSM 10237 / CIP 104748 / NCIMB 11846 / Nb-255), this protein is Small ribosomal subunit protein uS5.